The chain runs to 313 residues: MEKRLLDFEVGETVELFLLIKSSIKGTASNGKPFLSLVLQDKSGELEAKLWDVKESDEVNYGVQQIVHLIGDIQNYRGRKQLKIRQIRQATPLDGVNASEFMETAPINKEEMADEITQYIFEMKNANLQRITRALLKKYQDDFYDYPAAMRHHHEFVSGLSFHVVSMLRLAKAVSDLYPTVNRDLLYAGVILHDLGKVIELSGPVSTTYTLEGNLIGHISIVVEEVSKIADELSIDDEEVVVLKHVLLSHHGKGEWGSPKPPLVREAEILHQIDLMDASINMMDKVLKHTKPGEFSERVFGLDNRSFYNPTFE.

Positions 163 to 279 constitute an HD domain; the sequence is HVVSMLRLAK…LHQIDLMDAS (117 aa).

Belongs to the YhaM family.

Functionally, shows a 3'-5' exoribonuclease activity. The chain is 3'-5' exoribonuclease YhaM from Listeria welshimeri serovar 6b (strain ATCC 35897 / DSM 20650 / CCUG 15529 / CIP 8149 / NCTC 11857 / SLCC 5334 / V8).